Consider the following 120-residue polypeptide: uncharacterized protein (120 aa).

The first 16 residues, 1 to 16, serve as a signal peptide directing secretion; the sequence is MFKFILLCFCINFAFS.

This is an uncharacterized protein from Acheta domesticus (House cricket).